The chain runs to 2129 residues: Transcription initiation factor TFIID subunit 1 (2129 aa).

One can recognise a Protein kinase 1 domain in the interval 1–423 (MEMESDNSDD…VSQLHWEDDV (423 aa)). Disordered stretches follow at residues 77-233 (AEPP…DVRE), 246-348 (FSRL…PKVA), 377-405 (TKAA…EDPS), and 445-497 (AGWL…AEAP). The span at 79–88 (PPSDDEEEED) shows a compositional bias: acidic residues. 3 stretches are compositionally biased toward basic and acidic residues: residues 110-121 (VKREDGAVKAQD), 159-170 (VEAKLTKDDKEL), and 200-215 (DDSK…RKLD). Residues 263–273 (RHVRKRRRKRN) show a composition bias toward basic residues. A compositionally biased stretch (polar residues) spans 280–289 (TTNTGGSDSP). Ser286, Ser288, and Ser290 each carry phosphoserine. Ser315 is subject to Phosphoserine; by autocatalysis. Over residues 388 to 398 (LKDERRVKSPE) the composition is skewed to basic and acidic residues. A compositionally biased stretch (low complexity) spans 470-494 (GSGSSKQGSGASSKKAQQNAQAKPA). Position 603 is a phosphoserine (Ser603). Disordered regions lie at residues 1016 to 1038 (KPTQ…TDAD), 1149 to 1208 (LENM…LATN), 1296 to 1336 (AQNQ…PSRK), 1368 to 1391 (GMQS…SEKE), and 1415 to 1435 (KRHG…FTLK). A compositionally biased stretch (basic and acidic residues) spans 1019 to 1028 (QTKEEQESQP). The span at 1151–1160 (NMLSNKKTST) shows a compositional bias: polar residues. Residues 1163-1183 (SREREELERQELLRQLDEEHG) show a composition bias toward basic and acidic residues. The segment covering 1184–1193 (GPSGSGGAKG) has biased composition (gly residues). The span at 1368–1379 (GMQSSLSQSNPS) shows a compositional bias: polar residues. The short motif at 1442 to 1448 (GKKKRRV) is the Nuclear localization signal element. Bromo domains lie at 1466–1574 (RRRT…LAER) and 1588–1696 (LLDD…LIEF). Residues 1515–2065 (MDLQTMREYI…QHQQMGQAAS (551 aa)) enclose the Protein kinase 2 domain. 4 disordered regions span residues 1710 to 1872 (TQER…LDQG), 1973 to 1992 (LSHE…STSA), 2018 to 2042 (NNGM…SRVR), and 2101 to 2129 (QHQV…AWTF). Ser1740 is subject to Phosphoserine. Acidic residues predominate over residues 1836-1863 (LDEDLQCSTDDEDDDEEEDFQEVSEDEN). Positions 2023 to 2037 (IDDDLDISESDEEDD) are enriched in acidic residues. A compositionally biased stretch (low complexity) spans 2101–2120 (QHQVMPPMQSEQLQQQQTPQ).

The protein belongs to the TAF1 family. Belongs to the TFIID complex which is composed of TATA binding protein (Tbp) and a number of TBP-associated factors (Tafs). Taf1 is the largest component of the TFIID complex. Interacts with Tbp, Taf2, Taf4 and Taf6. The cofactor is Mg(2+).

The protein resides in the nucleus. The catalysed reaction is L-seryl-[protein] + ATP = O-phospho-L-seryl-[protein] + ADP + H(+). It carries out the reaction L-threonyl-[protein] + ATP = O-phospho-L-threonyl-[protein] + ADP + H(+). Its activity is regulated as follows. Autophosphorylates on Ser residues. Functionally, TFIID is a multimeric protein complex that plays a central role in mediating promoter responses to various activators and repressors. Largest component and core scaffold of the complex. Contains N- and C-terminal Ser/Thr kinase domains which can autophosphorylate or transphosphorylate other transcription factors. Possesses DNA-binding activity. Essential for progression of the G1 phase of the cell cycle. Negative regulator of the TATA box-binding activity of Tbp. The chain is Transcription initiation factor TFIID subunit 1 (Taf1) from Drosophila melanogaster (Fruit fly).